A 262-amino-acid chain; its full sequence is Hemin import ATP-binding protein HmuV (262 aa).

An ABC transporter domain is found at 2–241 (IRASDISVRL…ETMEAVFGCR (240 aa)). 34–41 (GPNGSGKT) contributes to the ATP binding site.

The protein belongs to the ABC transporter superfamily. Heme (hemin) importer (TC 3.A.1.14.5) family. As to quaternary structure, the complex is composed of two ATP-binding proteins (HmuV), two transmembrane proteins (HmuU) and a solute-binding protein (HmuT).

It is found in the cell inner membrane. Functionally, part of the ABC transporter complex HmuTUV involved in hemin import. Responsible for energy coupling to the transport system. The protein is Hemin import ATP-binding protein HmuV of Rhizobium meliloti (strain 1021) (Ensifer meliloti).